We begin with the raw amino-acid sequence, 599 residues long: Serine/threonine-protein kinase Nek1 (599 aa).

Residues 4 to 258 (YEVLEQIGKG…AAELLKHPHL (255 aa)) enclose the Protein kinase domain. ATP contacts are provided by residues 10–18 (IGKGAFGSA) and lysine 33. Residue aspartate 129 is the Proton acceptor of the active site. 3 disordered regions span residues 364 to 386 (SIVK…EPPK), 461 to 482 (SEDP…PQHC), and 504 to 542 (DDDD…DTSS). Low complexity predominate over residues 511 to 530 (DSSSGRNNAAAAASSRAGSS).

This sequence belongs to the protein kinase superfamily. NEK Ser/Thr protein kinase family. NIMA subfamily. Expressed in anthers, pistils and leaves.

The enzyme catalyses L-seryl-[protein] + ATP = O-phospho-L-seryl-[protein] + ADP + H(+). It carries out the reaction L-threonyl-[protein] + ATP = O-phospho-L-threonyl-[protein] + ADP + H(+). May be involved in plant development processes. In Oryza sativa subsp. japonica (Rice), this protein is Serine/threonine-protein kinase Nek1.